A 359-amino-acid polypeptide reads, in one-letter code: 3-dehydroquinate synthase (359 aa).

Residues 71-76 (DGEAYK), 105-109 (GVVGD), 129-130 (TT), K142, and K151 each bind NAD(+). Zn(2+) is bound by residues E184, H247, and H264.

It belongs to the sugar phosphate cyclases superfamily. Dehydroquinate synthase family. Co(2+) serves as cofactor. It depends on Zn(2+) as a cofactor. Requires NAD(+) as cofactor.

It localises to the cytoplasm. It catalyses the reaction 7-phospho-2-dehydro-3-deoxy-D-arabino-heptonate = 3-dehydroquinate + phosphate. Its pathway is metabolic intermediate biosynthesis; chorismate biosynthesis; chorismate from D-erythrose 4-phosphate and phosphoenolpyruvate: step 2/7. Its function is as follows. Catalyzes the conversion of 3-deoxy-D-arabino-heptulosonate 7-phosphate (DAHP) to dehydroquinate (DHQ). This is 3-dehydroquinate synthase from Burkholderia cenocepacia (strain HI2424).